Here is a 144-residue protein sequence, read N- to C-terminus: MSGLAKYLPGATNLLSKSGEVSLGSLVGKTVFLYFSASWCPPCRGFTPVLAEFYEKHHVAKNFEVVLISWDENESDFHDYYGKMPWLALPFDQRSTVSELGKTFGVESIPTLITINADTGAIIGTQARTRVIEDPDGANFPWPN.

The region spanning 2–144 (SGLAKYLPGA…PDGANFPWPN (143 aa)) is the Thioredoxin domain. A disulfide bridge connects residues Cys-40 and Cys-43.

The protein belongs to the thioredoxin family.

Acts as a thiol-disulfide oxidoreductase. It is spontaneously reduced by trypanothione. The sequence is that of Tryparedoxin from Trypanosoma brucei brucei.